A 391-amino-acid polypeptide reads, in one-letter code: Alanine racemase (391 aa).

K38 functions as the Proton acceptor; specific for D-alanine in the catalytic mechanism. K38 is subject to N6-(pyridoxal phosphate)lysine. R136 lines the substrate pocket. The active-site Proton acceptor; specific for L-alanine is the Y267. M315 is a substrate binding site.

Belongs to the alanine racemase family. Requires pyridoxal 5'-phosphate as cofactor.

It catalyses the reaction L-alanine = D-alanine. It participates in amino-acid biosynthesis; D-alanine biosynthesis; D-alanine from L-alanine: step 1/1. In terms of biological role, catalyzes the interconversion of L-alanine and D-alanine. May also act on other amino acids. The chain is Alanine racemase (alr) from Clostridium kluyveri (strain ATCC 8527 / DSM 555 / NBRC 12016 / NCIMB 10680 / K1).